Reading from the N-terminus, the 240-residue chain is Ribosomal RNA large subunit methyltransferase E (240 aa).

Positions 1-28 (MSSSPRSPDARPLKVRVKSARTRSSSSQ) are disordered. S-adenosyl-L-methionine-binding residues include G80, W82, D103, D119, and D143. Catalysis depends on K183, which acts as the Proton acceptor.

This sequence belongs to the class I-like SAM-binding methyltransferase superfamily. RNA methyltransferase RlmE family.

The protein localises to the cytoplasm. The enzyme catalyses uridine(2552) in 23S rRNA + S-adenosyl-L-methionine = 2'-O-methyluridine(2552) in 23S rRNA + S-adenosyl-L-homocysteine + H(+). Functionally, specifically methylates the uridine in position 2552 of 23S rRNA at the 2'-O position of the ribose in the fully assembled 50S ribosomal subunit. This is Ribosomal RNA large subunit methyltransferase E from Azorhizobium caulinodans (strain ATCC 43989 / DSM 5975 / JCM 20966 / LMG 6465 / NBRC 14845 / NCIMB 13405 / ORS 571).